The sequence spans 208 residues: Uracil phosphoribosyltransferase (208 aa).

5-phospho-alpha-D-ribose 1-diphosphate-binding positions include arginine 78, arginine 103, and 130-138; that span reads DPMLATGGS. Uracil is bound by residues isoleucine 193 and 198-200; that span reads GDA. Residue aspartate 199 coordinates 5-phospho-alpha-D-ribose 1-diphosphate.

This sequence belongs to the UPRTase family. It depends on Mg(2+) as a cofactor.

It carries out the reaction UMP + diphosphate = 5-phospho-alpha-D-ribose 1-diphosphate + uracil. Its pathway is pyrimidine metabolism; UMP biosynthesis via salvage pathway; UMP from uracil: step 1/1. Its activity is regulated as follows. Allosterically activated by GTP. In terms of biological role, catalyzes the conversion of uracil and 5-phospho-alpha-D-ribose 1-diphosphate (PRPP) to UMP and diphosphate. The chain is Uracil phosphoribosyltransferase from Neisseria gonorrhoeae (strain ATCC 700825 / FA 1090).